A 304-amino-acid polypeptide reads, in one-letter code: Hairy/enhancer-of-split related with YRPW motif protein 1 (304 aa).

A disordered region spans residues M1 to R52. Polar residues predominate over residues E28–I47. The segment at L48–A117 is transcriptional repression and interaction with NCOR1 and SIN3A. The 56-residue stretch at A49–L104 folds into the bHLH domain. The 37-residue stretch at Y122–L158 folds into the Orange domain. The interval A191–S234 is disordered. Residues G200–P210 are compositionally biased toward polar residues. Over residues R218 to S234 the composition is skewed to low complexity.

The protein belongs to the HEY family. Self-associates. Interacts with HES1 and HEYL. Interacts with HDAC1, NCOR1 and SIN3A. Interacts with GATA4 and GATA6. Interacts with CCDC89/BOIP.

The protein resides in the nucleus. In terms of biological role, transcriptional repressor which binds preferentially to the canonical E box sequence 5'-CACGTG-3'. Downstream effector of Notch signaling required for cardiovascular development. Specifically required for the Notch-induced endocardial epithelial to mesenchymal transition, which is itself criticial for cardiac valve and septum development. May be required in conjunction with HEY2 to specify arterial cell fate or identity. Promotes maintenance of neuronal precursor cells and glial versus neuronal fate specification. Represses transcription by the cardiac transcriptional activators GATA4 and GATA6 and by the neuronal bHLH factors ASCL1/MASH1 and NEUROD4/MATH3. The sequence is that of Hairy/enhancer-of-split related with YRPW motif protein 1 (HEY1) from Canis lupus familiaris (Dog).